The chain runs to 194 residues: Putative manganese efflux pump MntP (194 aa).

Helical transmembrane passes span 3–23, 37–57, 65–85, 112–132, 137–157, and 170–190; these read PITILLIGIAMSTDAFAAAIG, LYVAVIFGVIETATPIAGWLL, IAAFDHWIAFGLLSGLGIHMI, LAATALATSIDAAAIGISLAF, IGIVAAVIGLCTFTMVIFGVM, and AEIVGGIILIIVGSTILYEHL.

It belongs to the MntP (TC 9.B.29) family.

It localises to the cell inner membrane. Its function is as follows. Probably functions as a manganese efflux pump. The chain is Putative manganese efflux pump MntP from Xylella fastidiosa (strain M12).